A 397-amino-acid polypeptide reads, in one-letter code: MSTLLNPYFGEFGGMYVPQILMPALRQLEEAFVSAQSDAEFQAQFTDLLKNYAGRPTALTKCQNLTEGTRTTLYLKREDLLHGGAHKTNQVLGQALLAKRMGKTEIIAETGAGQHGVASALASALLGLKCRIYMGAKDVERQSPNVFRMKLMGAEVIPVYSGSATLKDACNEALRDWSGSYDRAHYMLGTAAGPHPFPTIVREFQRMIGEETRAQIMEKEGRLPDAVIACVGGGSNAIGMFADFINETSVGLIGVEPAGHGIETGEHGAPLKHGRVGIYFGMKAPMMQTDDGQIEESYSISAGLDFPSVGPQHAYLNSTGRAEYVSITDDEALEAFKTLCRQEGIIPALESSHALAHALKMMRAAPEKEQLLVVNLSGRGDKDIFTVHDIFKARGEM.

Lys-87 is modified (N6-(pyridoxal phosphate)lysine).

The protein belongs to the TrpB family. As to quaternary structure, tetramer of two alpha and two beta chains. Pyridoxal 5'-phosphate is required as a cofactor.

It carries out the reaction (1S,2R)-1-C-(indol-3-yl)glycerol 3-phosphate + L-serine = D-glyceraldehyde 3-phosphate + L-tryptophan + H2O. Its pathway is amino-acid biosynthesis; L-tryptophan biosynthesis; L-tryptophan from chorismate: step 5/5. The beta subunit is responsible for the synthesis of L-tryptophan from indole and L-serine. The protein is Tryptophan synthase beta chain of Cronobacter sakazakii (strain ATCC BAA-894) (Enterobacter sakazakii).